Reading from the N-terminus, the 446-residue chain is Ribosomal protein uS12 methylthiotransferase RimO (446 aa).

Positions 9-121 (PKVGFVSLGC…VLDAIHAALP (113 aa)) constitute an MTTase N-terminal domain. Residues Cys18, Cys54, Cys83, Cys152, Cys156, and Cys159 each contribute to the [4Fe-4S] cluster site. Residues 138–375 (LTPPHYAYLK…MAVQEAISRQ (238 aa)) enclose the Radical SAM core domain. In terms of domain architecture, TRAM spans 378–445 (QRRVGQRQRV…AHDLYGMVVS (68 aa)).

This sequence belongs to the methylthiotransferase family. RimO subfamily. The cofactor is [4Fe-4S] cluster.

Its subcellular location is the cytoplasm. The catalysed reaction is L-aspartate(89)-[ribosomal protein uS12]-hydrogen + (sulfur carrier)-SH + AH2 + 2 S-adenosyl-L-methionine = 3-methylsulfanyl-L-aspartate(89)-[ribosomal protein uS12]-hydrogen + (sulfur carrier)-H + 5'-deoxyadenosine + L-methionine + A + S-adenosyl-L-homocysteine + 2 H(+). Catalyzes the methylthiolation of an aspartic acid residue of ribosomal protein uS12. This is Ribosomal protein uS12 methylthiotransferase RimO from Acidithiobacillus ferrooxidans (strain ATCC 23270 / DSM 14882 / CIP 104768 / NCIMB 8455) (Ferrobacillus ferrooxidans (strain ATCC 23270)).